Consider the following 195-residue polypeptide: N-(5'-phosphoribosyl)anthranilate isomerase (195 aa).

The protein belongs to the TrpF family.

The catalysed reaction is N-(5-phospho-beta-D-ribosyl)anthranilate = 1-(2-carboxyphenylamino)-1-deoxy-D-ribulose 5-phosphate. It participates in amino-acid biosynthesis; L-tryptophan biosynthesis; L-tryptophan from chorismate: step 3/5. The chain is N-(5'-phosphoribosyl)anthranilate isomerase from Methanoregula boonei (strain DSM 21154 / JCM 14090 / 6A8).